Consider the following 117-residue polypeptide: MKDMKTIEGIIVVTTPEIPGYKVVEVKGVARGGTVRATHIGRDIMALLRNLKGGEVKEYTEMMAEAREEALRRMALHAKELGANAVVNFRFATSNLGGSMAEIYAYGTAVVVERVEK.

The protein belongs to the UPF0145 family.

In Pyrococcus horikoshii (strain ATCC 700860 / DSM 12428 / JCM 9974 / NBRC 100139 / OT-3), this protein is UPF0145 protein PH1682.